The primary structure comprises 236 residues: Small ribosomal subunit protein uS2c (236 aa).

It belongs to the universal ribosomal protein uS2 family.

Its subcellular location is the plastid. It is found in the chloroplast. This chain is Small ribosomal subunit protein uS2c (rps2), found in Nymphaea alba (White water-lily).